The primary structure comprises 101 residues: Gastrin (101 aa).

An N-terminal signal peptide occupies residues 1–21 (MQRLCVYVLIFALALAAFSEA). The segment at 22-82 (SWKPRSQQPD…SKKQGPWLEE (61 aa)) is disordered. Gln59 is subject to Pyrrolidone carboxylic acid; in form big gastrin. At Gln76 the chain carries Pyrrolidone carboxylic acid; in form gastrin. Sulfotyrosine; partial is present on Tyr87. Phe92 is subject to Phenylalanine amide. Phosphoserine is present on Ser96. The propeptide at 96–101 (SAEDEN) is removed in mature form.

The protein belongs to the gastrin/cholecystokinin family. In terms of processing, two different processing pathways probably exist in antral G-cells. In the dominant pathway progastrin is cleaved at three sites resulting in two major bioactive gastrins, gastrin-34 and gastrin-17. In the putative alternative pathway, progastrin may be processed only at the most C-terminal dibasic site resulting in the synthesis of gastrin-71. Post-translationally, sulfation enhances proteolytic processing, and blocks peptide degradation. Levels of sulfation differ between proteolytically-cleaved gastrins. Thus, gastrin-6 is almost 73% sulfated, whereas the larger gastrins are less than 50% sulfated. Sulfation levels are also tissue-specific.

Its subcellular location is the secreted. Its function is as follows. Gastrin stimulates the stomach mucosa to produce and secrete hydrochloric acid and the pancreas to secrete its digestive enzymes. It also stimulates smooth muscle contraction and increases blood circulation and water secretion in the stomach and intestine. The sequence is that of Gastrin (GAST) from Homo sapiens (Human).